Reading from the N-terminus, the 383-residue chain is Homeobox protein knotted-1-like 5 (383 aa).

Disordered regions lie at residues 1–35 (MSFN…HFSE) and 52–73 (TTAD…ADTN). Residues 281–301 (ELKHELKQGFKEKIVDIREEI) form the ELK domain. Residues 302-365 (MRKRRAGKLP…NQRKRNWNSN (64 aa)) constitute a DNA-binding region (homeobox; TALE-type). The tract at residues 361 to 383 (NWNSNSSTSSTLTKNKRKRTGKS) is disordered. The segment covering 362 to 373 (WNSNSSTSSTLT) has biased composition (low complexity). The segment covering 374 to 383 (KNKRKRTGKS) has biased composition (basic residues).

Belongs to the TALE/KNOX homeobox family. May form heterodimeric complex with the TALE/BELL protein BEL1, BLH1 and BLH2. Interacts with OFP1, OFP2, OFP3 and OFP4.

The protein localises to the nucleus. The protein is Homeobox protein knotted-1-like 5 (KNAT5) of Arabidopsis thaliana (Mouse-ear cress).